The primary structure comprises 348 residues: Beta-hexosaminidase (348 aa).

Substrate-binding positions include Asp64, Arg72, Arg138, and 168-169 (KH). The Proton donor/acceptor role is filled by His181. Residue Asp252 is the Nucleophile of the active site.

Belongs to the glycosyl hydrolase 3 family. NagZ subfamily.

It localises to the cytoplasm. The catalysed reaction is Hydrolysis of terminal non-reducing N-acetyl-D-hexosamine residues in N-acetyl-beta-D-hexosaminides.. It functions in the pathway cell wall biogenesis; peptidoglycan recycling. Its function is as follows. Plays a role in peptidoglycan recycling by cleaving the terminal beta-1,4-linked N-acetylglucosamine (GlcNAc) from peptide-linked peptidoglycan fragments, giving rise to free GlcNAc, anhydro-N-acetylmuramic acid and anhydro-N-acetylmuramic acid-linked peptides. The chain is Beta-hexosaminidase from Alkalilimnicola ehrlichii (strain ATCC BAA-1101 / DSM 17681 / MLHE-1).